Consider the following 365-residue polypeptide: Aminomethyltransferase (365 aa).

Belongs to the GcvT family. As to quaternary structure, the glycine cleavage system is composed of four proteins: P, T, L and H.

The catalysed reaction is N(6)-[(R)-S(8)-aminomethyldihydrolipoyl]-L-lysyl-[protein] + (6S)-5,6,7,8-tetrahydrofolate = N(6)-[(R)-dihydrolipoyl]-L-lysyl-[protein] + (6R)-5,10-methylene-5,6,7,8-tetrahydrofolate + NH4(+). Its function is as follows. The glycine cleavage system catalyzes the degradation of glycine. This is Aminomethyltransferase from Geobacillus thermodenitrificans (strain NG80-2).